The primary structure comprises 443 residues: Na(+)-translocating NADH-quinone reductase subunit A (443 aa).

Belongs to the NqrA family. Composed of six subunits; NqrA, NqrB, NqrC, NqrD, NqrE and NqrF.

It catalyses the reaction a ubiquinone + n Na(+)(in) + NADH + H(+) = a ubiquinol + n Na(+)(out) + NAD(+). NQR complex catalyzes the reduction of ubiquinone-1 to ubiquinol by two successive reactions, coupled with the transport of Na(+) ions from the cytoplasm to the periplasm. NqrA to NqrE are probably involved in the second step, the conversion of ubisemiquinone to ubiquinol. In Actinobacillus succinogenes (strain ATCC 55618 / DSM 22257 / CCUG 43843 / 130Z), this protein is Na(+)-translocating NADH-quinone reductase subunit A.